A 370-amino-acid chain; its full sequence is Dihydroorotate dehydrogenase (quinone) (370 aa).

Residues 67–71 (AGFDK) and Thr91 contribute to the FMN site. A substrate-binding site is contributed by Lys71. Residue 116–120 (NRMGF) coordinates substrate. FMN is bound by residues Asn146 and Asn179. Asn179 provides a ligand contact to substrate. Catalysis depends on Ser182, which acts as the Nucleophile. Residue Asn184 coordinates substrate. Positions 222 and 250 each coordinate FMN. 251–252 (NT) contacts substrate. Residues Gly276, Gly305, and 326–327 (YS) each bind FMN.

It belongs to the dihydroorotate dehydrogenase family. Type 2 subfamily. Monomer. It depends on FMN as a cofactor.

It is found in the cell membrane. It catalyses the reaction (S)-dihydroorotate + a quinone = orotate + a quinol. It functions in the pathway pyrimidine metabolism; UMP biosynthesis via de novo pathway; orotate from (S)-dihydroorotate (quinone route): step 1/1. Its function is as follows. Catalyzes the conversion of dihydroorotate to orotate with quinone as electron acceptor. The sequence is that of Dihydroorotate dehydrogenase (quinone) from Streptomyces griseus subsp. griseus (strain JCM 4626 / CBS 651.72 / NBRC 13350 / KCC S-0626 / ISP 5235).